Consider the following 1332-residue polypeptide: Sister chromatid cohesion protein PDS5 homolog A (1332 aa).

N-acetylmethionine is present on methionine 1. One copy of the HEAT repeat lies at 392–428; the sequence is ALVNDQLLGFVRERTLDKRWRVRKEAMMGLAQLYKKY. Serine 1096 bears the Phosphoserine mark. The interval 1138 to 1332 is disordered; it reads GVLGTVNKPL…PAERQIDLQR (195 aa). Residue lysine 1145 is modified to N6-acetyllysine. The span at 1160 to 1173 shows a compositional bias: polar residues; it reads GTETGSNINANSEL. Serine 1174 and serine 1194 each carry phosphoserine. At threonine 1207 the chain carries Phosphothreonine. Lysine 1210 carries the post-translational modification N6-acetyllysine. Residues 1222-1232 are compositionally biased toward polar residues; sequence SDQSTQGNISS. An N6-acetyllysine modification is found at lysine 1288. A Phosphoserine modification is found at serine 1303. Positions 1316-1332 are enriched in basic and acidic residues; it reads DGAKKAVPAERQIDLQR.

This sequence belongs to the PDS5 family. Interacts with the cohesin complex. Interacts with WAPL (via FGF motifs) or CDCA5 (via the FGF motif); the interaction is direct, cohesin-dependent and competitive. Interacts with SMC3. Interacts with TP63.

Its subcellular location is the nucleus. In terms of biological role, probable regulator of sister chromatid cohesion in mitosis which may stabilize cohesin complex association with chromatin. May couple sister chromatid cohesion during mitosis to DNA replication. Cohesion ensures that chromosome partitioning is accurate in both meiotic and mitotic cells and plays an important role in DNA repair. This chain is Sister chromatid cohesion protein PDS5 homolog A (Pds5a), found in Mus musculus (Mouse).